We begin with the raw amino-acid sequence, 637 residues long: Extracellular metalloproteinase 2 (637 aa).

Residues 1 to 20 (MRSFLLASLASVATLKSAQA) form the signal peptide. Residues 21 to 244 (HPAHSTRGLS…VHAVVDYSAD (224 aa)) constitute a propeptide that is removed on maturation. Residues N302, N328, N337, and N413 are each glycosylated (N-linked (GlcNAc...) asparagine). H430 is a binding site for Zn(2+). Residue E431 is part of the active site. Residue H434 participates in Zn(2+) binding.

It belongs to the peptidase M36 family. Requires Zn(2+) as cofactor.

It is found in the secreted. In terms of biological role, secreted metalloproteinase that allows assimilation of proteinaceous substrates. This chain is Extracellular metalloproteinase 2 (MEP2), found in Phaeosphaeria nodorum (strain SN15 / ATCC MYA-4574 / FGSC 10173) (Glume blotch fungus).